The primary structure comprises 225 residues: Cytidylate kinase (225 aa).

ATP is bound at residue 12–20 (GPSGAGKGT).

This sequence belongs to the cytidylate kinase family. Type 1 subfamily.

It localises to the cytoplasm. The enzyme catalyses CMP + ATP = CDP + ADP. It catalyses the reaction dCMP + ATP = dCDP + ADP. The polypeptide is Cytidylate kinase (Vibrio cholerae serotype O1 (strain ATCC 39315 / El Tor Inaba N16961)).